The sequence spans 247 residues: 2,3-bisphosphoglycerate-dependent phosphoglycerate mutase (247 aa).

Substrate-binding positions include 8-15 (RHGESVWN), 21-22 (TG), Arg60, 87-90 (ERHY), Lys98, 114-115 (RR), and 183-184 (GN). The Tele-phosphohistidine intermediate role is filled by His9. Glu87 acts as the Proton donor/acceptor in catalysis.

This sequence belongs to the phosphoglycerate mutase family. BPG-dependent PGAM subfamily. Homodimer.

The catalysed reaction is (2R)-2-phosphoglycerate = (2R)-3-phosphoglycerate. Its pathway is carbohydrate degradation; glycolysis; pyruvate from D-glyceraldehyde 3-phosphate: step 3/5. Functionally, catalyzes the interconversion of 2-phosphoglycerate and 3-phosphoglycerate. In Geobacter sulfurreducens (strain ATCC 51573 / DSM 12127 / PCA), this protein is 2,3-bisphosphoglycerate-dependent phosphoglycerate mutase.